Here is a 317-residue protein sequence, read N- to C-terminus: Acetyl-coenzyme A carboxylase carboxyl transferase subunit beta (317 aa).

A disordered region spans residues 1–28 (MANNMTDTMTKFDTNNDSASLQQNGNKA). The 263-residue stretch at 55-317 (PSTKCSSCHS…LCSVPNVDAQ (263 aa)) folds into the CoA carboxyltransferase N-terminal domain. 4 residues coordinate Zn(2+): C59, C62, C78, and C81. The C4-type zinc-finger motif lies at 59 to 81 (CSSCHSVITNTALIFNCYVCPHC).

It belongs to the AccD/PCCB family. As to quaternary structure, acetyl-CoA carboxylase is a heterohexamer composed of biotin carboxyl carrier protein (AccB), biotin carboxylase (AccC) and two subunits each of ACCase subunit alpha (AccA) and ACCase subunit beta (AccD). Zn(2+) serves as cofactor.

The protein localises to the cytoplasm. It catalyses the reaction N(6)-carboxybiotinyl-L-lysyl-[protein] + acetyl-CoA = N(6)-biotinyl-L-lysyl-[protein] + malonyl-CoA. It participates in lipid metabolism; malonyl-CoA biosynthesis; malonyl-CoA from acetyl-CoA: step 1/1. Its function is as follows. Component of the acetyl coenzyme A carboxylase (ACC) complex. Biotin carboxylase (BC) catalyzes the carboxylation of biotin on its carrier protein (BCCP) and then the CO(2) group is transferred by the transcarboxylase to acetyl-CoA to form malonyl-CoA. In Psychrobacter arcticus (strain DSM 17307 / VKM B-2377 / 273-4), this protein is Acetyl-coenzyme A carboxylase carboxyl transferase subunit beta.